Consider the following 757-residue polypeptide: MDNLSFHDGNIFNLLHTRSQDPSHEVDQRMQFHSSLVRRLSQEQELEGHQGCVNALAWNSNGSLLISGSDDLRINIWNYSSRKLLHSIDTGHTANIFCTKFVPETSDELVVSGAGDAEVRLFNTSRLSGRAEDDNAIIPSALYQCHTRRVKKLAVEPGNPNVVWSASEDGTLRQHDFRESTSCPPAGTAHQECRSVLLDLRSGAKRALADPPKQTLSLKSCDISATRPHLLLVGGSDAFARLYDRRMLPPLASSRKRMPPPPCVNYFCPMHLSERGRTNLHLTHVTFSPNGEEVLLSYSGEHVYLMNVNNGICSTGIMQYTPGDVDNLFSFSNNLHDVESPPQVSTTPQNGFHRSSNAATVKKCTELVEIAKWSLEEGTDVFYAIEAANEVLDAHSNDIESALRHECLCTRAALLLKRKWKNDAHMAVRDCHNARRIDASSFKAHYYMSEALQQLGKCKEALDFATAAQHMNPSDADIVAKVESIKRDLQAAGAEKNEETGAGTTRVLSLSDILYRSEANSDSSHDMSRSEREDSDYDEELELDIQTSLSDDEGRDTDSNSMRGSLNLRIHRVGDDKPMENTVDNASSGTASSSQNDRTSYQPEGAIDMKRRYVGHCNVGTDIKQASFLGQRGEYIASGSDDGRWFIWEKQTGRLMKVLVGDESVLNCIQCHPFDSVVATSGIDNTIKIWSPTASVPSIVAGGSAGPATANVVEVMESNQQKLSRNRENPLSVELMQRFRMQEFAEGNFHPFECTQS.

WD repeat units follow at residues 6-43 (FHDG…LSQE), 48-87 (GHQG…LLHS), 91-132 (GHTA…GRAE), 145-185 (CHTR…SCPP), 213-253 (KQTL…PLAS), and 277-316 (RTNL…CSTG). The short motif at 245-257 (RRMLPPLASSRKR) is the Nuclear localization signal element. A TPR repeat occupies 442-475 (FKAHYYMSEALQQLGKCKEALDFATAAQHMNPSD). The tract at residues 519-601 (ANSDSSHDMS…SSSQNDRTSY (83 aa)) is disordered. Basic and acidic residues predominate over residues 523-532 (SSHDMSRSER). Residues 533–543 (EDSDYDEELEL) show a composition bias toward acidic residues. Residues 582-601 (TVDNASSGTASSSQNDRTSY) are compositionally biased toward polar residues. WD repeat units follow at residues 618–658 (NVGT…LMKV) and 661–700 (GDES…PSIV). Cys-754 carries S-12-hydroxyfarnesyl cysteine; by FTB/ERA1 lipidation.

Interacts with DDB1; the subcellular localization of this complex depends on farnesylation status. Binds to HDA9 in the cytosol when farnesylated. Post-translationally, farnesylated at Cys-754 by FTB/ERA1; this modification triggers an exclusion from the nucleus.

It localises to the nucleus. The protein localises to the cytoplasm. The protein resides in the cytosol. It participates in protein modification; protein ubiquitination. May function as a substrate adapter for CUL4-DDB1 E3 ubiquitin-protein ligase complex. Negative regulator of fatty acid biosynthetic process and accumulation. Acts as an abscisic acid (ABA) negative regulator. Involved in responses to salt (NaCl) and osmotic (e.g. in response to mannitol and PEG) stresses. The protein is Protein ALTERED SEED GERMINATION 2 of Arabidopsis thaliana (Mouse-ear cress).